Here is a 452-residue protein sequence, read N- to C-terminus: tRNA modification GTPase MnmE (452 aa).

Residues R21, E82, and R121 each contribute to the (6S)-5-formyl-5,6,7,8-tetrahydrofolate site. The TrmE-type G domain occupies 214–372 (GARVVLVGRP…LAKTIATTLL (159 aa)). N224 is a binding site for K(+). Residues 224–229 (NVGKSS), 243–249 (TPIPGTT), 268–271 (DTAG), and 353–355 (SAR) contribute to the GTP site. A Mg(2+)-binding site is contributed by S228. The K(+) site is built by T243, I245, and T248. A Mg(2+)-binding site is contributed by T249. K452 provides a ligand contact to (6S)-5-formyl-5,6,7,8-tetrahydrofolate.

The protein belongs to the TRAFAC class TrmE-Era-EngA-EngB-Septin-like GTPase superfamily. TrmE GTPase family. In terms of assembly, homodimer. Heterotetramer of two MnmE and two MnmG subunits. It depends on K(+) as a cofactor.

It is found in the cytoplasm. Exhibits a very high intrinsic GTPase hydrolysis rate. Involved in the addition of a carboxymethylaminomethyl (cmnm) group at the wobble position (U34) of certain tRNAs, forming tRNA-cmnm(5)s(2)U34. The sequence is that of tRNA modification GTPase MnmE from Chloroflexus aurantiacus (strain ATCC 29366 / DSM 635 / J-10-fl).